Reading from the N-terminus, the 669-residue chain is Methionine--tRNA ligase (669 aa).

The 'HIGH' region motif lies at 15 to 25 (PYANGPAHIGH). Residues cysteine 146, cysteine 149, cysteine 158, and cysteine 162 each coordinate Zn(2+). Positions 328-332 (KFSKS) match the 'KMSKS' region motif. Position 331 (lysine 331) interacts with ATP. A tRNA-binding domain is found at 570 to 669 (QFKALDLRVG…KEVPAGCGIR (100 aa)).

The protein belongs to the class-I aminoacyl-tRNA synthetase family. MetG type 1 subfamily. Homodimer. Zn(2+) is required as a cofactor.

It is found in the cytoplasm. The enzyme catalyses tRNA(Met) + L-methionine + ATP = L-methionyl-tRNA(Met) + AMP + diphosphate. In terms of biological role, is required not only for elongation of protein synthesis but also for the initiation of all mRNA translation through initiator tRNA(fMet) aminoacylation. This chain is Methionine--tRNA ligase, found in Methanothrix thermoacetophila (strain DSM 6194 / JCM 14653 / NBRC 101360 / PT) (Methanosaeta thermophila).